Consider the following 120-residue polypeptide: Large ribosomal subunit protein uL18 (120 aa).

It belongs to the universal ribosomal protein uL18 family. In terms of assembly, part of the 50S ribosomal subunit; part of the 5S rRNA/L5/L18/L25 subcomplex. Contacts the 5S and 23S rRNAs.

Its function is as follows. This is one of the proteins that bind and probably mediate the attachment of the 5S RNA into the large ribosomal subunit, where it forms part of the central protuberance. This chain is Large ribosomal subunit protein uL18, found in Geobacillus kaustophilus (strain HTA426).